The sequence spans 333 residues: Leucine carboxyl methyltransferase 1 (333 aa).

S-adenosyl-L-methionine contacts are provided by residues R79, G108, D131, 180 to 181 (NV), and E206.

The protein belongs to the methyltransferase superfamily. LCMT family.

The enzyme catalyses [phosphatase 2A protein]-C-terminal L-leucine + S-adenosyl-L-methionine = [phosphatase 2A protein]-C-terminal L-leucine methyl ester + S-adenosyl-L-homocysteine. Its function is as follows. Methylates the carboxyl group of the C-terminal leucine residue of protein phosphatase 2A catalytic subunits to form alpha-leucine ester residues. The sequence is that of Leucine carboxyl methyltransferase 1 (PPM1) from Kluyveromyces lactis (strain ATCC 8585 / CBS 2359 / DSM 70799 / NBRC 1267 / NRRL Y-1140 / WM37) (Yeast).